The following is a 391-amino-acid chain: mRNA-capping enzyme subunit alpha (391 aa).

The active-site N6-GMP-lysine intermediate is K63. Residues 363–391 (KERNRRPRDEDRKRVGGDDHDHGAKRARQ) form a disordered region.

This sequence belongs to the eukaryotic GTase family. In terms of assembly, heterodimer. The mRNA-capping enzyme is composed of two separate chains alpha and beta, respectively a mRNA guanylyltransferase and an mRNA 5'-triphosphate monophosphatase.

It is found in the nucleus. The enzyme catalyses a 5'-end diphospho-ribonucleoside in mRNA + GTP + H(+) = a 5'-end (5'-triphosphoguanosine)-ribonucleoside in mRNA + diphosphate. In terms of biological role, second step of mRNA capping. Transfer of the GMP moiety of GTP to the 5'-end of RNA via an enzyme-GMP covalent reaction intermediate. The sequence is that of mRNA-capping enzyme subunit alpha (CEG1) from Yarrowia lipolytica (strain CLIB 122 / E 150) (Yeast).